The chain runs to 244 residues: UPF0246 protein FMG_1068 (244 aa).

This sequence belongs to the UPF0246 family.

The chain is UPF0246 protein FMG_1068 from Finegoldia magna (strain ATCC 29328 / DSM 20472 / WAL 2508) (Peptostreptococcus magnus).